Here is an 874-residue protein sequence, read N- to C-terminus: Valine--tRNA ligase (874 aa).

The tract at residues 1 to 22 (MTENSQQPQPAPSTELPTQYTP) is disordered. The short motif at 57–67 (PNVTGSLHLGH) is the 'HIGH' region element. A 'KMSKS' region motif is present at residues 531–535 (KMSKS). K534 is an ATP binding site. A coiled-coil region spans residues 805-871 (VIDFAAERKR…TRITAQLEKL (67 aa)).

This sequence belongs to the class-I aminoacyl-tRNA synthetase family. ValS type 1 subfamily. Monomer.

It is found in the cytoplasm. The enzyme catalyses tRNA(Val) + L-valine + ATP = L-valyl-tRNA(Val) + AMP + diphosphate. In terms of biological role, catalyzes the attachment of valine to tRNA(Val). As ValRS can inadvertently accommodate and process structurally similar amino acids such as threonine, to avoid such errors, it has a 'posttransfer' editing activity that hydrolyzes mischarged Thr-tRNA(Val) in a tRNA-dependent manner. This is Valine--tRNA ligase from Streptomyces coelicolor (strain ATCC BAA-471 / A3(2) / M145).